Consider the following 355-residue polypeptide: Guanine nucleotide-binding protein G(z) subunit alpha (355 aa).

A compositionally biased stretch (basic and acidic residues) spans 1–14; that stretch reads MGCRQSSEEKEAAR. A disordered region spans residues 1–26; the sequence is MGCRQSSEEKEAARRSRRIDRHLRSE. Residue G2 is the site of N-myristoyl glycine attachment. Residue C3 is the site of S-palmitoyl cysteine attachment. A G-alpha domain is found at 32–355; that stretch reads REIKLLLLGT…QNNLKYIGLC (324 aa). The interval 35 to 48 is G1 motif; sequence KLLLLGTSNSGKST. GTP contacts are provided by residues 40–47, 176–182, 201–205, 270–273, and A327; these read GTSNSGKS, LRSRDMT, DVGGQ, and NKKD. Mg(2+) is bound at residue S47. The segment at 174–182 is G2 motif; that stretch reads DILRSRDMT. An ADP-ribosylarginine; by cholera toxin modification is found at R179. T182 is a binding site for Mg(2+). The tract at residues 197 to 206 is G3 motif; sequence FKMVDVGGQR. A G4 motif region spans residues 266 to 273; sequence ILFLNKKD. Residues 325–330 are G5 motif; that stretch reads TCATDT.

It belongs to the G-alpha family. G(i/o/t/z) subfamily. In terms of assembly, G-proteins are composed of 3 units; alpha, beta and gamma. The alpha chain contains the guanine nucleotide binding site. Interacts with ADGRB2.

Its subcellular location is the membrane. Its function is as follows. Guanine nucleotide-binding proteins (G proteins) are involved as modulators or transducers in various transmembrane signaling systems. The chain is Guanine nucleotide-binding protein G(z) subunit alpha (GNAZ) from Homo sapiens (Human).